A 348-amino-acid chain; its full sequence is Alternative squalene epoxidase (348 aa).

The segment covering 1-10 (MLVDRVENNE) has biased composition (basic and acidic residues). The segment at 1–26 (MLVDRVENNEKQQQQMASSSDAMSDS) is disordered. Residues 12-26 (QQQQMASSSDAMSDS) are compositionally biased toward low complexity. 3 helical membrane passes run 55–75 (AIAW…LLLS), 105–125 (LGLV…WIFF), and 153–173 (GLLT…YLAI). Residues 197–332 (FMCLVLQDGI…FMWFDQLGGT (136 aa)) form the Fatty acid hydroxylase domain. A Histidine box-1 motif is present at residues 211–215 (HVLEH). The Histidine box-2 motif lies at 226 to 230 (HKPHH). 2 helical membrane-spanning segments follow: residues 243–263 (GSLM…ANLV) and 277–297 (SYAC…DGIF). Residues 308–312 (HHVHH) carry the Histidine box-3 motif.

It belongs to the sterol desaturase family. As to quaternary structure, interacts with cytochrome b5/PHATRDRAFT_30770. Requires Fe cation as cofactor.

The protein localises to the endoplasmic reticulum membrane. The enzyme catalyses squalene + 2 Fe(II)-[cytochrome b5] + O2 + 2 H(+) = (S)-2,3-epoxysqualene + 2 Fe(III)-[cytochrome b5] + H2O. It functions in the pathway terpene metabolism; lanosterol biosynthesis; lanosterol from farnesyl diphosphate. Its activity is regulated as follows. The activity of this enzyme is not inhibited by terbinafine, an established inhibitor of the conventional flavoprotein squalene epoxidase. Functionally, catalyzes the stereospecific epoxidation of squalene at the terminal double bond to form (S)-2,3-epoxysqualene, the first oxygenation step in sterol biosynthesis. In Phaeodactylum tricornutum (strain CCAP 1055/1), this protein is Alternative squalene epoxidase.